A 356-amino-acid chain; its full sequence is UDP-N-acetylglucosamine--N-acetylmuramyl-(pentapeptide) pyrophosphoryl-undecaprenol N-acetylglucosamine transferase (356 aa).

UDP-N-acetyl-alpha-D-glucosamine contacts are provided by residues 15-17 (TGG), asparagine 127, arginine 163, serine 191, isoleucine 244, 263-268 (ALTVSE), and glutamine 288.

The protein belongs to the glycosyltransferase 28 family. MurG subfamily.

Its subcellular location is the cell inner membrane. The catalysed reaction is di-trans,octa-cis-undecaprenyl diphospho-N-acetyl-alpha-D-muramoyl-L-alanyl-D-glutamyl-meso-2,6-diaminopimeloyl-D-alanyl-D-alanine + UDP-N-acetyl-alpha-D-glucosamine = di-trans,octa-cis-undecaprenyl diphospho-[N-acetyl-alpha-D-glucosaminyl-(1-&gt;4)]-N-acetyl-alpha-D-muramoyl-L-alanyl-D-glutamyl-meso-2,6-diaminopimeloyl-D-alanyl-D-alanine + UDP + H(+). It functions in the pathway cell wall biogenesis; peptidoglycan biosynthesis. Its function is as follows. Cell wall formation. Catalyzes the transfer of a GlcNAc subunit on undecaprenyl-pyrophosphoryl-MurNAc-pentapeptide (lipid intermediate I) to form undecaprenyl-pyrophosphoryl-MurNAc-(pentapeptide)GlcNAc (lipid intermediate II). This Klebsiella pneumoniae subsp. pneumoniae (strain ATCC 700721 / MGH 78578) protein is UDP-N-acetylglucosamine--N-acetylmuramyl-(pentapeptide) pyrophosphoryl-undecaprenol N-acetylglucosamine transferase.